The primary structure comprises 493 residues: Cytochrome P450 2E1 (493 aa).

298–303 provides a ligand contact to substrate; it reads FAGTET. Position 437 (Cys437) interacts with heme.

The protein belongs to the cytochrome P450 family. Interacts with chaperones HSP70 and HSP90; this interaction is required for initial targeting to mitochondria. Heme is required as a cofactor.

Its subcellular location is the endoplasmic reticulum membrane. It localises to the microsome membrane. The protein resides in the mitochondrion inner membrane. The enzyme catalyses an organic molecule + reduced [NADPH--hemoprotein reductase] + O2 = an alcohol + oxidized [NADPH--hemoprotein reductase] + H2O + H(+). It catalyses the reaction (5Z,8Z,11Z)-eicosatrienoate + reduced [NADPH--hemoprotein reductase] + O2 = 19-hydroxy-(5Z,8Z,11Z)-eicosatrienoate + oxidized [NADPH--hemoprotein reductase] + H2O + H(+). It carries out the reaction (5Z,8Z,11Z,14Z,17Z)-eicosapentaenoate + reduced [NADPH--hemoprotein reductase] + O2 = 19-hydroxy-(5Z,8Z,11Z,14Z,17Z)-eicosapentaenoate + oxidized [NADPH--hemoprotein reductase] + H2O + H(+). The catalysed reaction is (4Z,7Z,10Z,13Z,16Z,19Z)-docosahexaenoate + reduced [NADPH--hemoprotein reductase] + O2 = 21-hydroxy-(4Z,7Z,10Z,13Z,16Z,19Z)-docosahexaenoate + oxidized [NADPH--hemoprotein reductase] + H2O + H(+). The enzyme catalyses dodecanoate + reduced [NADPH--hemoprotein reductase] + O2 = 11-hydroxydodecanoate + oxidized [NADPH--hemoprotein reductase] + H2O + H(+). It catalyses the reaction tetradecanoate + reduced [NADPH--hemoprotein reductase] + O2 = 13-hydroxytetradecanoate + oxidized [NADPH--hemoprotein reductase] + H2O + H(+). It carries out the reaction 4-nitrophenol + NADPH + O2 + H(+) = 4-nitrocatechol + NADP(+) + H2O. It functions in the pathway lipid metabolism; fatty acid metabolism. With respect to regulation, the omega-1 hydroxylase activity is stimulated by cytochrome b5. Functionally, a cytochrome P450 monooxygenase involved in the metabolism of fatty acids. Mechanistically, uses molecular oxygen inserting one oxygen atom into a substrate, and reducing the second into a water molecule, with two electrons provided by NADPH via cytochrome P450 reductase (NADPH--hemoprotein reductase). Catalyzes the hydroxylation of carbon-hydrogen bonds. Hydroxylates fatty acids specifically at the omega-1 position displaying the highest catalytic activity for saturated fatty acids. May be involved in the oxidative metabolism of xenobiotics. The sequence is that of Cytochrome P450 2E1 from Homo sapiens (Human).